We begin with the raw amino-acid sequence, 551 residues long: Glucose-6-phosphate isomerase (551 aa).

Residues 161-162 (GS), 212-217 (SKTFTT), Q356, E360, H391, and K516 each bind D-glucose 6-phosphate. E360 acts as the Proton donor in catalysis. Catalysis depends on residues H391 and K516.

The protein belongs to the GPI family. As to quaternary structure, homodimer.

It localises to the cytoplasm. The protein localises to the cytosol. The enzyme catalyses alpha-D-glucose 6-phosphate = beta-D-fructose 6-phosphate. It participates in carbohydrate degradation; glycolysis; D-glyceraldehyde 3-phosphate and glycerone phosphate from D-glucose: step 2/4. Its function is as follows. In the cytoplasm, catalyzes the conversion of glucose-6-phosphate to fructose-6-phosphate, the second step in glycolysis, and the reverse reaction during gluconeogenesis. In Agaricus bisporus (White button mushroom), this protein is Glucose-6-phosphate isomerase (gpi1).